A 294-amino-acid polypeptide reads, in one-letter code: MHPRFQTAFAQLADNLQSALEPILADKYFPALLTGEQVSSLKSATGLDEDALAFALLPLAAACARTPLSNFNVGAIARGVSGTWYFGANMEFIGATMQQTVHAEQSAISHAWLSGEKALAAITVNYTPCGHCRQFMNELNSSLDLRIHLPGREAHALRDYLPDAFGPKDLEIKTLLMDEQDHGYALTGDALSQAAIAAANRSHMPYSKSPSGVALECKDGRIFSGSYAENAAFNPTLPPLQGALILLNLKGYDYPDIQRAVLAEKADAPLIQWDATSATLKALGCHSIDRVLLA.

2 CMP/dCMP-type deaminase domains span residues 48–168 and 186–294; these read DEDA…FGPK and LTGD…VLLA. 89–91 lines the substrate pocket; that stretch reads NME. A Zn(2+)-binding site is contributed by H102. The active-site Proton donor is the E104. Zn(2+)-binding residues include C129 and C132.

It belongs to the cytidine and deoxycytidylate deaminase family. Homodimer. Zn(2+) serves as cofactor.

The enzyme catalyses cytidine + H2O + H(+) = uridine + NH4(+). It catalyses the reaction 2'-deoxycytidine + H2O + H(+) = 2'-deoxyuridine + NH4(+). This enzyme scavenges exogenous and endogenous cytidine and 2'-deoxycytidine for UMP synthesis. The protein is Cytidine deaminase of Escherichia coli (strain ATCC 8739 / DSM 1576 / NBRC 3972 / NCIMB 8545 / WDCM 00012 / Crooks).